The primary structure comprises 109 residues: Nucleoid-associated protein VP2178 (109 aa).

2 disordered regions span residues 1–22 and 88–109; these read MFGK…ERMQ and QKEK…KMPF.

Belongs to the YbaB/EbfC family. As to quaternary structure, homodimer.

Its subcellular location is the cytoplasm. The protein resides in the nucleoid. Binds to DNA and alters its conformation. May be involved in regulation of gene expression, nucleoid organization and DNA protection. The polypeptide is Nucleoid-associated protein VP2178 (Vibrio parahaemolyticus serotype O3:K6 (strain RIMD 2210633)).